The sequence spans 519 residues: Flavonoid 8-hydroxylase 2, chloroplastic (519 aa).

A chloroplast-targeting transit peptide spans 1–46 (MEVLQASSLSFQLLRRHSRNNLINKFRNPSLPRIHMPRQNIDLKTF). The Rieske domain maps to 77–188 (WYPVASVCDL…SCVRNGIVWF (112 aa)). The [2Fe-2S] cluster site is built by cysteine 119, histidine 121, cysteine 139, and histidine 142. Fe cation is bound by residues histidine 241 and histidine 246. The Redox-active motif signature appears at 447–450 (CSSC). Helical transmembrane passes span 462-478 (IGLQAMSLVFVAMAAAV) and 485-501 (YSMVAMAVLSFLASKWL).

The cofactor is [2Fe-2S] cluster. As to expression, glandular trichome-specific expression in leaves.

The protein resides in the plastid. Its subcellular location is the chloroplast membrane. It localises to the cytoplasm. The enzyme catalyses salvigenin + 2 reduced [2Fe-2S]-[ferredoxin] + O2 + 2 H(+) = 8-hydroxysalvigenin + 2 oxidized [2Fe-2S]-[ferredoxin] + H2O. It participates in flavonoid metabolism. Its function is as follows. Rieske-type, PAO-family oxygenase involved in the biosynthesis of polymethoxylated flavonoids natural products such as nevadensin and salvigenin, aroma compounds which contribute to the flavor of sweet basil, and exhibit pharmacological activities such as anti-allergic, anti-oxidant, antibacterial, anti-proliferative, and anti-inflammatory effects. Catalyzes the hydroxylation of salvigenin to produce 8-hydroxysalvigenin (8-OH-SALV). The sequence is that of Flavonoid 8-hydroxylase 2, chloroplastic from Ocimum basilicum (Sweet basil).